The chain runs to 225 residues: tRNA (guanine-N(1)-)-methyltransferase (225 aa).

S-adenosyl-L-methionine-binding positions include Gly-112 and 132-137 (IGDYVL).

The protein belongs to the RNA methyltransferase TrmD family. As to quaternary structure, homodimer.

The protein localises to the cytoplasm. The catalysed reaction is guanosine(37) in tRNA + S-adenosyl-L-methionine = N(1)-methylguanosine(37) in tRNA + S-adenosyl-L-homocysteine + H(+). In terms of biological role, specifically methylates guanosine-37 in various tRNAs. In Porphyromonas gingivalis (strain ATCC BAA-308 / W83), this protein is tRNA (guanine-N(1)-)-methyltransferase.